The sequence spans 184 residues: Ethylene-responsive transcription factor ERF024 (184 aa).

Positions 1 to 21 (MQGTSKDNGGRHPLYRGVRQR) are disordered. The segment at residues 14-72 (LYRGVRQRKNSNKWVSEIREPRKPNRIWLGTFSTPEMAAIAYDVAALALKGSQAELNFP) is a DNA-binding region (AP2/ERF).

This sequence belongs to the AP2/ERF transcription factor family. ERF subfamily.

The protein localises to the nucleus. Functionally, probably acts as a transcriptional activator. Binds to the GCC-box pathogenesis-related promoter element. May be involved in the regulation of gene expression by stress factors and by components of stress signal transduction pathways. This Arabidopsis thaliana (Mouse-ear cress) protein is Ethylene-responsive transcription factor ERF024 (ERF024).